Consider the following 539-residue polypeptide: Chaperone Ric-8A (539 aa).

Positions 506–539 (PMGVTSDGRLGPLDEAAQKMLQRQESSDLDSDSD) are disordered.

This sequence belongs to the synembryn family.

The protein resides in the cytoplasm. Its subcellular location is the cell cortex. In terms of biological role, chaperone that specifically binds and folds nascent G alpha proteins prior to G protein heterotrimer formation, promoting their stability and activity: folds GNAI1, GNAO1, GNA13 and GNAQ. Does not fold G(s) G-alpha proteins GNAS nor GNAL. Also acts as a guanine nucleotide exchange factor (GEF) for G alpha proteins by stimulating exchange of bound GDP for free GTP. The protein is Chaperone Ric-8A (ric8a) of Xenopus laevis (African clawed frog).